The chain runs to 108 residues: UPF0060 membrane protein YnfA (108 aa).

The Periplasmic segment spans residues 1–5 (MLKTT). The helical transmembrane segment at 6-26 (LLFFVTALCEIIGCFLPWLWI) threads the bilayer. Residues 27 to 30 (KRGA) lie on the Cytoplasmic side of the membrane. A helical transmembrane segment spans residues 31 to 51 (SVWWLLPAAASLALFVWLLTL). Topologically, residues 52–60 (HPAASGRVY) are periplasmic. A helical transmembrane segment spans residues 61–81 (AAYGGVYVCTALLWLRVVDGV). The Cytoplasmic segment spans residues 82-84 (RLT). The chain crosses the membrane as a helical span at residues 85 to 105 (VYDWSGALIALCGMLIIVVGW). At 106-108 (GRT) the chain is on the periplasmic side.

This sequence belongs to the UPF0060 family.

Its subcellular location is the cell inner membrane. This chain is UPF0060 membrane protein YnfA, found in Salmonella typhi.